The following is a 243-amino-acid chain: Pyridoxine 5'-phosphate synthase (243 aa).

Asn9 contacts 3-amino-2-oxopropyl phosphate. Residue Asp11 to His12 coordinates 1-deoxy-D-xylulose 5-phosphate. Residue Arg20 participates in 3-amino-2-oxopropyl phosphate binding. Residue His45 is the Proton acceptor of the active site. 1-deoxy-D-xylulose 5-phosphate-binding residues include Arg47 and His52. Glu72 serves as the catalytic Proton acceptor. Residue Thr102 coordinates 1-deoxy-D-xylulose 5-phosphate. The active-site Proton donor is His193. 3-amino-2-oxopropyl phosphate is bound by residues Gly194 and Gly215–His216.

The protein belongs to the PNP synthase family. As to quaternary structure, homooctamer; tetramer of dimers.

The protein resides in the cytoplasm. The enzyme catalyses 3-amino-2-oxopropyl phosphate + 1-deoxy-D-xylulose 5-phosphate = pyridoxine 5'-phosphate + phosphate + 2 H2O + H(+). The protein operates within cofactor biosynthesis; pyridoxine 5'-phosphate biosynthesis; pyridoxine 5'-phosphate from D-erythrose 4-phosphate: step 5/5. Functionally, catalyzes the complicated ring closure reaction between the two acyclic compounds 1-deoxy-D-xylulose-5-phosphate (DXP) and 3-amino-2-oxopropyl phosphate (1-amino-acetone-3-phosphate or AAP) to form pyridoxine 5'-phosphate (PNP) and inorganic phosphate. The chain is Pyridoxine 5'-phosphate synthase from Vibrio cholerae serotype O1 (strain ATCC 39315 / El Tor Inaba N16961).